A 128-amino-acid polypeptide reads, in one-letter code: MANGHRSQIKRERNAVKDTRPSAKLSYARVSVQKACFVLDAIRGKSLDEALAIVMYNPRYASSIIEKLLKSAAANAENNNGMDPSKLYVEECYANKGPTMKRVHPRAQGRAYRIEKRMSHITVVLNER.

Residues 1–20 (MANGHRSQIKRERNAVKDTR) form a disordered region. Residues 9-20 (IKRERNAVKDTR) show a composition bias toward basic and acidic residues.

It belongs to the universal ribosomal protein uL22 family. In terms of assembly, part of the 50S ribosomal subunit.

Its function is as follows. This protein binds specifically to 23S rRNA; its binding is stimulated by other ribosomal proteins, e.g. L4, L17, and L20. It is important during the early stages of 50S assembly. It makes multiple contacts with different domains of the 23S rRNA in the assembled 50S subunit and ribosome. The globular domain of the protein is located near the polypeptide exit tunnel on the outside of the subunit, while an extended beta-hairpin is found that lines the wall of the exit tunnel in the center of the 70S ribosome. In Lachnospira eligens (strain ATCC 27750 / DSM 3376 / VPI C15-48 / C15-B4) (Eubacterium eligens), this protein is Large ribosomal subunit protein uL22.